The sequence spans 287 residues: Phosphatidylserine decarboxylase proenzyme (287 aa).

Catalysis depends on charge relay system; for autoendoproteolytic cleavage activity residues aspartate 89, histidine 146, and serine 252. Residue serine 252 is the Schiff-base intermediate with substrate; via pyruvic acid; for decarboxylase activity of the active site. Serine 252 carries the pyruvic acid (Ser); by autocatalysis modification.

This sequence belongs to the phosphatidylserine decarboxylase family. PSD-B subfamily. Prokaryotic type I sub-subfamily. Heterodimer of a large membrane-associated beta subunit and a small pyruvoyl-containing alpha subunit. It depends on pyruvate as a cofactor. Post-translationally, is synthesized initially as an inactive proenzyme. Formation of the active enzyme involves a self-maturation process in which the active site pyruvoyl group is generated from an internal serine residue via an autocatalytic post-translational modification. Two non-identical subunits are generated from the proenzyme in this reaction, and the pyruvate is formed at the N-terminus of the alpha chain, which is derived from the carboxyl end of the proenzyme. The autoendoproteolytic cleavage occurs by a canonical serine protease mechanism, in which the side chain hydroxyl group of the serine supplies its oxygen atom to form the C-terminus of the beta chain, while the remainder of the serine residue undergoes an oxidative deamination to produce ammonia and the pyruvoyl prosthetic group on the alpha chain. During this reaction, the Ser that is part of the protease active site of the proenzyme becomes the pyruvoyl prosthetic group, which constitutes an essential element of the active site of the mature decarboxylase.

The protein localises to the cell membrane. It catalyses the reaction a 1,2-diacyl-sn-glycero-3-phospho-L-serine + H(+) = a 1,2-diacyl-sn-glycero-3-phosphoethanolamine + CO2. Its pathway is phospholipid metabolism; phosphatidylethanolamine biosynthesis; phosphatidylethanolamine from CDP-diacylglycerol: step 2/2. Its function is as follows. Catalyzes the formation of phosphatidylethanolamine (PtdEtn) from phosphatidylserine (PtdSer). In Shewanella amazonensis (strain ATCC BAA-1098 / SB2B), this protein is Phosphatidylserine decarboxylase proenzyme.